We begin with the raw amino-acid sequence, 555 residues long: Luciferin 2-monooxygenase (555 aa).

An N-terminal signal peptide occupies residues 1-11 (MKIIILSVILA). VWFD domains follow at residues 80–266 (IECR…EYCK) and 319–494 (GTCV…RLCN). Cystine bridges form between C82–C222, C321–C454, C343–C493, and C352–C451. N-linked (GlcNAc...) asparagine glycans are attached at residues N186 and N408.

In terms of processing, the cysteine residues presumably exist in intramolecular disulfide bridges. The N-terminus is blocked.

It carries out the reaction Cypridina luciferin + O2 = oxidized Cypridina luciferin + hnu + CO2. The polypeptide is Luciferin 2-monooxygenase (Vargula hilgendorfii (Sea firefly)).